Reading from the N-terminus, the 455-residue chain is MAGIDRRGFLKASMASVAAAALAGCASQQGTSATPKAAGKSVMGLVVPKMAEVRVGLIGVGERGVGFIHHFNNIEGARITAICDTDPLVISRAQKIMADYGRSQPAYYSKGQQAYLDLVAREDVDIVVIATPWALHHPMAKAAMLAGKHAFVEVPMGMTIEELWDLVDTAELTQRNCMMMENVCYGRDELMVLNMVRQGLFGELLHGEAAYIHELRWQMKELDRKTGSWRTGYHAQINGNLYPTHGLGPVAQYMNINRGDRFDYLSSMSSPALGRAAYAQREFPKDHQRNQLNYICGDMNTSLIKTVKGRTIMVQHDTTTPRPYSRHNLIQGTNGVFAGFPNRIALENHGRGSFHEWDQDMEHWYGKYDHPLWTRMGREAEQNGGHGGMDFLMCWRMIYCLRNGEPLDQDVYDGAAWSAVQPLSAASVADRGNSRDFPDFTRGVWQSATPLGIVE.

The tat-type signal signal peptide spans 1–33 (MAGIDRRGFLKASMASVAAAALAGCASQQGTSA). NAD(+) contacts are provided by residues 62–63 (ER), aspartate 84, glutamine 112, 133–136 (WALH), 153–154 (EV), and asparagine 182. Substrate contacts are provided by residues tyrosine 211, arginine 230, 242–245 (YPTH), and tyrosine 324. Position 242 (tyrosine 242) interacts with NAD(+).

It belongs to the Gfo/Idh/MocA family. Glycosyl hydrolase 109 subfamily. It depends on NAD(+) as a cofactor. Predicted to be exported by the Tat system. The position of the signal peptide cleavage has not been experimentally proven.

Its function is as follows. Glycosidase. This Shewanella amazonensis (strain ATCC BAA-1098 / SB2B) protein is Glycosyl hydrolase family 109 protein.